The primary structure comprises 350 residues: Guanine nucleotide-binding protein G(t) subunit alpha-1 (350 aa).

Positions 1–21 (MGAGASAEEKHSRELEKKLKE) are disordered. G2 carries the N-myristoyl glycine lipid modification. A compositionally biased stretch (basic and acidic residues) spans 7 to 21 (AEEKHSRELEKKLKE). Residues 28–350 (RTVKLLLLGA…KENLKDCGLF (323 aa)) enclose the G-alpha domain. The tract at residues 31–44 (KLLLLGAGESGKST) is G1 motif. 36-43 (GAGESGKS) is a GTP binding site. S43 lines the Mg(2+) pocket. Residue Y142 is modified to Phosphotyrosine; by SRC. Residues D146, 171 to 177 (LRSRVKT), G199, 265 to 268 (NKKD), and A322 contribute to the GTP site. Residues 169–177 (DVLRSRVKT) are G2 motif. Residue R174 is modified to ADP-ribosylarginine; by cholera toxin. T177 is a binding site for Mg(2+). Residues 192–201 (FRMFDVGGQR) form a G3 motif region. Residues 261–268 (VLFLNKKD) are G4 motif. Residues 320–325 (TCATDT) form a G5 motif region. An interaction with RHO region spans residues 340-350 (IKENLKDCGLF). C347 carries the post-translational modification ADP-ribosylcysteine; by pertussis toxin.

The protein belongs to the G-alpha family. G(i/o/t/z) subfamily. In terms of assembly, heterotrimeric G proteins are composed of 3 subunits alpha, beta and gamma. The alpha chain contains the guanine nucleotide binding site. Interacts with RHO. Interacts with RGS9 and PDE6G. Interacts (when myristoylated) with UNC119; interaction is required for localization in sensory neurons. As to expression, rod photoreceptor cells. Predominantly expressed in the retina followed by the ciliary body, iris and retinal pigment epithelium.

It localises to the cell projection. The protein localises to the cilium. The protein resides in the photoreceptor outer segment. It is found in the membrane. Its subcellular location is the photoreceptor inner segment. In terms of biological role, functions as a signal transducer for the rod photoreceptor RHO. Required for normal RHO-mediated light perception by the retina. Guanine nucleotide-binding proteins (G proteins) function as transducers downstream of G protein-coupled receptors (GPCRs), such as the photoreceptor RHO. The alpha chain contains the guanine nucleotide binding site and alternates between an active, GTP-bound state and an inactive, GDP-bound state. Activated RHO promotes GDP release and GTP binding. Signaling is mediated via downstream effector proteins, such as cGMP-phosphodiesterase. The sequence is that of Guanine nucleotide-binding protein G(t) subunit alpha-1 (GNAT1) from Homo sapiens (Human).